A 105-amino-acid chain; its full sequence is Small ribosomal subunit protein uS17 (105 aa).

This sequence belongs to the universal ribosomal protein uS17 family. In terms of assembly, part of the 30S ribosomal subunit. Contacts protein S12.

One of the primary rRNA binding proteins, it binds directly to 16S rRNA where it helps nucleate assembly of the platform and body of the 30S subunit by bringing together and stabilizing interactions between several different RNA helices. The combined cluster of proteins S8, S12 and S17 appears to hold together the shoulder and platform of the 30S subunit. In Thermus thermophilus (strain ATCC 27634 / DSM 579 / HB8), this protein is Small ribosomal subunit protein uS17.